The chain runs to 303 residues: Ornithine carbamoyltransferase (303 aa).

Residues 52–55 (STRT), Gln-79, Arg-103, and 130–133 (HPCQ) contribute to the carbamoyl phosphate site. L-ornithine-binding positions include Asn-161, Asp-222, and 226–227 (SM). Residues 262 to 263 (CL) and Arg-290 contribute to the carbamoyl phosphate site.

It belongs to the aspartate/ornithine carbamoyltransferase superfamily. OTCase family.

It is found in the cytoplasm. It carries out the reaction carbamoyl phosphate + L-ornithine = L-citrulline + phosphate + H(+). The protein operates within amino-acid biosynthesis; L-arginine biosynthesis; L-arginine from L-ornithine and carbamoyl phosphate: step 1/3. Reversibly catalyzes the transfer of the carbamoyl group from carbamoyl phosphate (CP) to the N(epsilon) atom of ornithine (ORN) to produce L-citrulline. The chain is Ornithine carbamoyltransferase from Geobacter metallireducens (strain ATCC 53774 / DSM 7210 / GS-15).